A 254-amino-acid chain; its full sequence is Phosphoribosylaminoimidazole-succinocarboxamide synthase (254 aa).

It belongs to the SAICAR synthetase family.

The enzyme catalyses 5-amino-1-(5-phospho-D-ribosyl)imidazole-4-carboxylate + L-aspartate + ATP = (2S)-2-[5-amino-1-(5-phospho-beta-D-ribosyl)imidazole-4-carboxamido]succinate + ADP + phosphate + 2 H(+). Its pathway is purine metabolism; IMP biosynthesis via de novo pathway; 5-amino-1-(5-phospho-D-ribosyl)imidazole-4-carboxamide from 5-amino-1-(5-phospho-D-ribosyl)imidazole-4-carboxylate: step 1/2. The protein is Phosphoribosylaminoimidazole-succinocarboxamide synthase of Gluconacetobacter diazotrophicus (strain ATCC 49037 / DSM 5601 / CCUG 37298 / CIP 103539 / LMG 7603 / PAl5).